Here is a 222-residue protein sequence, read N- to C-terminus: MTETSPPPVLDTAQARVLGCLIEKEATTPDAYPLTVNAAQVAANQKTAREPVLNLQTGVVHHALRQLETLGLVRQQFSSRAERYEHRLGSVLDLTRQQVALIGLLLLRGPQTLGELYARSERLARFNDADDVRHHLERLIQRGLAAQLPRASGQREDRYMHLLSGELDVEALQAAAARAAPSAPSGSDSSDLDARMQALEATVVELQEALAAVQARLEAAGA.

It belongs to the UPF0502 family.

The polypeptide is UPF0502 protein XCV4380 (Xanthomonas euvesicatoria pv. vesicatoria (strain 85-10) (Xanthomonas campestris pv. vesicatoria)).